The sequence spans 540 residues: Cytochrome bc1 complex cytochrome b subunit (540 aa).

A helical membrane pass occupies residues 40 to 60 (EIALYSFIILLLTGVYLTLFF). Heme contacts are provided by histidine 105 and histidine 119. Transmembrane regions (helical) follow at residues 109 to 129 (ALTFMVSMTVHMLRIFFTGAF), 137 to 157 (WIIGCVLLFLGMAEGFMGYSL), and 169 to 189 (IMSAIILALPIIGTWLHWLIF). Residues histidine 206 and histidine 221 each contribute to the heme site. Helical transmembrane passes span 207–227 (VLIIPGIILGLIAAHLALVWY), 259–279 (FGLVTFGVLALLAGLTSINAI), 325–345 (AFWVALLCGVLVGLLVGYPFI), 371–391 (LGVMAIVFYFLLTLSGGNDLF), and 408–428 (IGLIVLPPLAYFITYRICLGL).

This sequence belongs to the cytochrome b family. The cytochrome bc1 complex is composed of a cytochrome b (QcrB), the Rieske protein iron-sulfur (QcrA) and a diheme cytochrome c (QcrC) subunit. Requires heme as cofactor.

The protein localises to the cell membrane. The catalysed reaction is a quinol + 2 Fe(III)-[cytochrome c](out) = a quinone + 2 Fe(II)-[cytochrome c](out) + 2 H(+)(out). In terms of biological role, cytochrome b subunit of the cytochrome bc1 complex, an essential component of the respiratory electron transport chain required for ATP synthesis. The bc1 complex catalyzes the oxidation of menaquinol and the reduction of cytochrome c in the respiratory chain. The bc1 complex operates through a Q-cycle mechanism that couples electron transfer to generation of the proton gradient that drives ATP synthesis. The sequence is that of Cytochrome bc1 complex cytochrome b subunit (qcrB) from Corynebacterium diphtheriae (strain ATCC 700971 / NCTC 13129 / Biotype gravis).